The sequence spans 95 residues: Co-chaperonin GroES (95 aa).

It belongs to the GroES chaperonin family. In terms of assembly, heptamer of 7 subunits arranged in a ring. Interacts with the chaperonin GroEL.

Its subcellular location is the cytoplasm. Its function is as follows. Together with the chaperonin GroEL, plays an essential role in assisting protein folding. The GroEL-GroES system forms a nano-cage that allows encapsulation of the non-native substrate proteins and provides a physical environment optimized to promote and accelerate protein folding. GroES binds to the apical surface of the GroEL ring, thereby capping the opening of the GroEL channel. The sequence is that of Co-chaperonin GroES from Desulfotalea psychrophila (strain LSv54 / DSM 12343).